The following is a 414-amino-acid chain: Argininosuccinate synthase (414 aa).

Residues 9 to 17 (AYSGGLDTS) and alanine 35 each bind ATP. The L-citrulline site is built by tyrosine 86 and serine 91. 114–122 (SHGATGKGN) contributes to the ATP binding site. Threonine 118, asparagine 122, and aspartate 123 together coordinate L-aspartate. Asparagine 122 serves as a coordination point for L-citrulline. L-citrulline-binding residues include arginine 126, serine 179, serine 188, glutamate 269, and tyrosine 281.

Belongs to the argininosuccinate synthase family. Homotetramer.

It is found in the cytoplasm. The protein localises to the cytosol. The catalysed reaction is L-citrulline + L-aspartate + ATP = 2-(N(omega)-L-arginino)succinate + AMP + diphosphate + H(+). It functions in the pathway amino-acid biosynthesis; L-arginine biosynthesis; L-arginine from L-ornithine and carbamoyl phosphate: step 2/3. It participates in nitrogen metabolism; urea cycle; (N(omega)-L-arginino)succinate from L-aspartate and L-citrulline: step 1/1. Its function is as follows. One of the enzymes of the urea cycle, the metabolic pathway transforming neurotoxic amonia produced by protein catabolism into inocuous urea in the liver of ureotelic animals. Catalyzes the formation of arginosuccinate from aspartate, citrulline and ATP and together with ASL it is responsible for the biosynthesis of arginine in most body tissues. The protein is Argininosuccinate synthase of Danio rerio (Zebrafish).